Here is a 310-residue protein sequence, read N- to C-terminus: Ribosomal RNA small subunit methyltransferase H (310 aa).

S-adenosyl-L-methionine-binding positions include 32–34 (GGH), D52, F79, D100, and Q107.

The protein belongs to the methyltransferase superfamily. RsmH family.

The protein resides in the cytoplasm. It catalyses the reaction cytidine(1402) in 16S rRNA + S-adenosyl-L-methionine = N(4)-methylcytidine(1402) in 16S rRNA + S-adenosyl-L-homocysteine + H(+). Its function is as follows. Specifically methylates the N4 position of cytidine in position 1402 (C1402) of 16S rRNA. This Bacillus anthracis (strain A0248) protein is Ribosomal RNA small subunit methyltransferase H.